The sequence spans 99 residues: Aspartyl/glutamyl-tRNA(Asn/Gln) amidotransferase subunit C (99 aa).

This sequence belongs to the GatC family. In terms of assembly, heterotrimer of A, B and C subunits.

The catalysed reaction is L-glutamyl-tRNA(Gln) + L-glutamine + ATP + H2O = L-glutaminyl-tRNA(Gln) + L-glutamate + ADP + phosphate + H(+). The enzyme catalyses L-aspartyl-tRNA(Asn) + L-glutamine + ATP + H2O = L-asparaginyl-tRNA(Asn) + L-glutamate + ADP + phosphate + 2 H(+). Functionally, allows the formation of correctly charged Asn-tRNA(Asn) or Gln-tRNA(Gln) through the transamidation of misacylated Asp-tRNA(Asn) or Glu-tRNA(Gln) in organisms which lack either or both of asparaginyl-tRNA or glutaminyl-tRNA synthetases. The reaction takes place in the presence of glutamine and ATP through an activated phospho-Asp-tRNA(Asn) or phospho-Glu-tRNA(Gln). The sequence is that of Aspartyl/glutamyl-tRNA(Asn/Gln) amidotransferase subunit C from Orientia tsutsugamushi (strain Ikeda) (Rickettsia tsutsugamushi).